The chain runs to 89 residues: Large ribosomal subunit protein bL27 (89 aa).

The tract at residues M1–L21 is disordered.

The protein belongs to the bacterial ribosomal protein bL27 family.

This chain is Large ribosomal subunit protein bL27, found in Chelativorans sp. (strain BNC1).